Here is a 527-residue protein sequence, read N- to C-terminus: EGF domain-specific O-linked N-acetylglucosamine transferase (527 aa).

The first 19 residues, 1 to 19, serve as a signal peptide directing secretion; sequence MLMLLVFGVLLHEVPLSGQ. A Required for optimal activity motif is present at residues 295–297; the sequence is DYD. Asn354 carries N-linked (GlcNAc...) asparagine glycosylation. Positions 524-527 match the Prevents secretion from ER motif; sequence HDEL.

This sequence belongs to the glycosyltransferase 61 family.

It localises to the endoplasmic reticulum lumen. The enzyme catalyses L-seryl-[protein] + UDP-N-acetyl-alpha-D-glucosamine = 3-O-(N-acetyl-beta-D-glucosaminyl)-L-seryl-[protein] + UDP + H(+). The catalysed reaction is L-threonyl-[protein] + UDP-N-acetyl-alpha-D-glucosamine = 3-O-(N-acetyl-beta-D-glucosaminyl)-L-threonyl-[protein] + UDP + H(+). Catalyzes the transfer of a single N-acetylglucosamine from UDP-GlcNAc to a serine or threonine residue in extracellular proteins resulting in their modification with a beta-linked N-acetylglucosamine (O-GlcNAc). Specifically glycosylates the Thr residue located between the fifth and sixth conserved cysteines of folded EGF-like domains. This is EGF domain-specific O-linked N-acetylglucosamine transferase (Eogt) from Rattus norvegicus (Rat).